The sequence spans 67 residues: Large ribosomal subunit protein bL35 (67 aa).

The interval 1–20 (MPKLKTKSGAKKRFVPKKSG) is disordered.

It belongs to the bacterial ribosomal protein bL35 family.

In Anaeromyxobacter dehalogenans (strain 2CP-C), this protein is Large ribosomal subunit protein bL35.